The chain runs to 293 residues: Ribosomal protein L11 methyltransferase (293 aa).

S-adenosyl-L-methionine-binding residues include Thr145, Gly166, Asp188, and Asn230.

It belongs to the methyltransferase superfamily. PrmA family.

It localises to the cytoplasm. It carries out the reaction L-lysyl-[protein] + 3 S-adenosyl-L-methionine = N(6),N(6),N(6)-trimethyl-L-lysyl-[protein] + 3 S-adenosyl-L-homocysteine + 3 H(+). Functionally, methylates ribosomal protein L11. The protein is Ribosomal protein L11 methyltransferase of Salmonella arizonae (strain ATCC BAA-731 / CDC346-86 / RSK2980).